The chain runs to 425 residues: Serine--tRNA ligase (425 aa).

L-serine is bound at residue 231-233 (TAE). 262–264 (RSE) contributes to the ATP binding site. Glu-285 serves as a coordination point for L-serine. An ATP-binding site is contributed by 349-352 (EISS). Ser-385 is a binding site for L-serine.

The protein belongs to the class-II aminoacyl-tRNA synthetase family. Type-1 seryl-tRNA synthetase subfamily. Homodimer. The tRNA molecule binds across the dimer.

It localises to the cytoplasm. It catalyses the reaction tRNA(Ser) + L-serine + ATP = L-seryl-tRNA(Ser) + AMP + diphosphate + H(+). The catalysed reaction is tRNA(Sec) + L-serine + ATP = L-seryl-tRNA(Sec) + AMP + diphosphate + H(+). It participates in aminoacyl-tRNA biosynthesis; selenocysteinyl-tRNA(Sec) biosynthesis; L-seryl-tRNA(Sec) from L-serine and tRNA(Sec): step 1/1. Its function is as follows. Catalyzes the attachment of serine to tRNA(Ser). Is also able to aminoacylate tRNA(Sec) with serine, to form the misacylated tRNA L-seryl-tRNA(Sec), which will be further converted into selenocysteinyl-tRNA(Sec). The protein is Serine--tRNA ligase of Bacillus subtilis (strain 168).